The following is a 359-amino-acid chain: uncharacterized protein (359 aa).

This is an uncharacterized protein from Archaeoglobus fulgidus (strain ATCC 49558 / DSM 4304 / JCM 9628 / NBRC 100126 / VC-16).